A 218-amino-acid polypeptide reads, in one-letter code: Ribonuclease T (218 aa).

Positions 20 to 194 constitute an Exonuclease domain; that stretch reads VVIDVETAGF…YDAERTAELF (175 aa). Mg(2+) contacts are provided by aspartate 23, glutamate 25, histidine 181, and aspartate 186. The Proton donor/acceptor role is filled by histidine 181.

It belongs to the RNase T family. Homodimer. Mg(2+) is required as a cofactor.

Its function is as follows. Trims short 3' overhangs of a variety of RNA species, leaving a one or two nucleotide 3' overhang. Responsible for the end-turnover of tRNA: specifically removes the terminal AMP residue from uncharged tRNA (tRNA-C-C-A). Also appears to be involved in tRNA biosynthesis. The protein is Ribonuclease T of Baumannia cicadellinicola subsp. Homalodisca coagulata.